A 728-amino-acid polypeptide reads, in one-letter code: Propionyl-CoA carboxylase alpha chain, mitochondrial (728 aa).

Residues 1–52 constitute a mitochondrion transit peptide; that stretch reads MAGFWVGTAPLVAAGRRGRWPPQQLMLSAALRTLKHVLYYSRQCLMVSRNLG. The Biotin carboxylation domain occupies 62–509; the sequence is TFDKILVANR…STKFLSDVYP (448 aa). K65 bears the N6-acetyllysine; alternate mark. Position 65 is an N6-succinyllysine; alternate (K65). Position 119 is an N6-succinyllysine (K119). K150 is modified (N6-acetyllysine; alternate). The residue at position 150 (K150) is an N6-succinyllysine; alternate. K177 lines the ATP pocket. Positions 181–378 constitute an ATP-grasp domain; it reads KLLAKKAEVN…LVQEMIRVAK (198 aa). Residue K200 is modified to N6-acetyllysine; alternate. N6-succinyllysine; alternate is present on K200. Residues 209 to 270, E261, and N296 contribute to the ATP site; that span reads AREI…PRHI. At S252 the chain carries Phosphoserine. Position 262 is an N6-succinyllysine (K262). K328 bears the N6-acetyllysine; alternate mark. K328 carries the post-translational modification N6-succinyllysine; alternate. Residues E336, E349, and N351 each contribute to the Mg(2+) site. Positions 336, 349, and 351 each coordinate Mn(2+). E349 is an active-site residue. 2 positions are modified to N6-succinyllysine: K385 and K407. Position 409 (F409) interacts with biotin. K496 carries the post-translational modification N6-acetyllysine. N6-succinyllysine is present on residues K502, K513, and K648. The region spanning 653-728 is the Biotinyl-binding domain; the sequence is KVTEDTSSVL…GEGDLLVELE (76 aa). K694 carries the post-translational modification N6-biotinyllysine; by HLCS.

In terms of assembly, the holoenzyme is a dodecamer composed of 6 PCCA/alpha subunits and 6 PCCB/beta subunits. Interacts (via the biotin carboxylation domain) with SIRT4. Interacts with SIRT3 and SIRT5. Mg(2+) is required as a cofactor. Mn(2+) serves as cofactor. The cofactor is biotin. Acetylated. Post-translationally, the biotin cofactor is covalently attached to the C-terminal biotinyl-binding domain and is required for the catalytic activity. Biotinylation is catalyzed by HLCS.

It localises to the mitochondrion matrix. The catalysed reaction is propanoyl-CoA + hydrogencarbonate + ATP = (S)-methylmalonyl-CoA + ADP + phosphate + H(+). It catalyses the reaction butanoyl-CoA + hydrogencarbonate + ATP = (2S)-ethylmalonyl-CoA + ADP + phosphate + H(+). It participates in metabolic intermediate metabolism; propanoyl-CoA degradation; succinyl-CoA from propanoyl-CoA: step 1/3. Functionally, this is one of the 2 subunits of the biotin-dependent propionyl-CoA carboxylase (PCC), a mitochondrial enzyme involved in the catabolism of odd chain fatty acids, branched-chain amino acids isoleucine, threonine, methionine, and valine and other metabolites. Propionyl-CoA carboxylase catalyzes the carboxylation of propionyl-CoA/propanoyl-CoA to D-methylmalonyl-CoA/(S)-methylmalonyl-CoA. Within the holoenzyme, the alpha subunit catalyzes the ATP-dependent carboxylation of the biotin carried by the biotin carboxyl carrier (BCC) domain, while the beta subunit then transfers the carboxyl group from carboxylated biotin to propionyl-CoA. Propionyl-CoA carboxylase also significantly acts on butyryl-CoA/butanoyl-CoA, which is converted to ethylmalonyl-CoA/(2S)-ethylmalonyl-CoA at a much lower rate. Other alternative minor substrates include (2E)-butenoyl-CoA/crotonoyl-CoA. The protein is Propionyl-CoA carboxylase alpha chain, mitochondrial of Homo sapiens (Human).